The primary structure comprises 217 residues: Probable cutinase 3 (217 aa).

Residues 1–17 form the signal peptide; sequence MSLRSLFVAGLATLALA. Disulfide bonds link cysteine 39–cysteine 118 and cysteine 65–cysteine 79. The active-site Nucleophile is the serine 129. Cysteines 180 and 187 form a disulfide. Aspartate 184 is an active-site residue. Histidine 197 acts as the Proton donor/acceptor in catalysis.

It belongs to the cutinase family.

The protein localises to the secreted. The catalysed reaction is cutin + H2O = cutin monomers.. Its function is as follows. Catalyzes the hydrolysis of complex carboxylic polyesters found in the cell wall of plants. Degrades cutin, a macromolecule that forms the structure of the plant cuticle. The sequence is that of Probable cutinase 3 from Neosartorya fischeri (strain ATCC 1020 / DSM 3700 / CBS 544.65 / FGSC A1164 / JCM 1740 / NRRL 181 / WB 181) (Aspergillus fischerianus).